A 357-amino-acid chain; its full sequence is 3-isopropylmalate dehydrogenase (357 aa).

Position 76–89 (76–89) interacts with NAD(+); the sequence is GPKWDNEPSHNRPE. Residues arginine 96, arginine 106, arginine 135, and aspartate 223 each contribute to the substrate site. Mg(2+) is bound by residues aspartate 223, aspartate 247, and aspartate 251. 281 to 293 lines the NAD(+) pocket; it reads GSAPDIAGQDKAN.

Belongs to the isocitrate and isopropylmalate dehydrogenases family. LeuB type 1 subfamily. Homodimer. The cofactor is Mg(2+). Mn(2+) is required as a cofactor.

It is found in the cytoplasm. It catalyses the reaction (2R,3S)-3-isopropylmalate + NAD(+) = 4-methyl-2-oxopentanoate + CO2 + NADH. It participates in amino-acid biosynthesis; L-leucine biosynthesis; L-leucine from 3-methyl-2-oxobutanoate: step 3/4. Its function is as follows. Catalyzes the oxidation of 3-carboxy-2-hydroxy-4-methylpentanoate (3-isopropylmalate) to 3-carboxy-4-methyl-2-oxopentanoate. The product decarboxylates to 4-methyl-2 oxopentanoate. The chain is 3-isopropylmalate dehydrogenase from Helicobacter hepaticus (strain ATCC 51449 / 3B1).